The following is a 452-amino-acid chain: MKVISNFQNKKILILGLAKSGEAAAKLLTKLGALVTVNDSKPFDQNPAAQALLEEGIKVICGSHPVELLDENFEYMVKNPGIPYDNPMVKRALAKEIPILTEVELAYFVSEAPIIGITGSNGKTTTTTMIADVLNAGGQSALLSGNIGYPASKVVQKAIAGDTLVMELSSFQLVGVNAFRPHIAVITNLMPTHLDYHGSFEDYVAAKWMIQAQMTESDYLILNANQEISATLAKTTKATVIPFSTQKVVDGAYLNDGILYFKEQAIIAATDLGVPGSHNIENALATIAVAKLSGIADDIIAQCLSHFGGVKHRLQRVGQIKDITFYNDSKSTNILATQKALSGFDNSRLILIAGGLDRGNEFDDLVPDLLGLKQMIILGESAERMKRAANKAEVSYLEARSVAEATELAFKLAQTGDTILLSPANASWDMYPNFEVRGDEFLATFDCLRGDA.

119–125 is an ATP binding site; it reads GSNGKTT.

The protein belongs to the MurCDEF family.

It localises to the cytoplasm. The catalysed reaction is UDP-N-acetyl-alpha-D-muramoyl-L-alanine + D-glutamate + ATP = UDP-N-acetyl-alpha-D-muramoyl-L-alanyl-D-glutamate + ADP + phosphate + H(+). Its pathway is cell wall biogenesis; peptidoglycan biosynthesis. Cell wall formation. Catalyzes the addition of glutamate to the nucleotide precursor UDP-N-acetylmuramoyl-L-alanine (UMA). The chain is UDP-N-acetylmuramoylalanine--D-glutamate ligase from Streptococcus pyogenes serotype M4 (strain MGAS10750).